A 597-amino-acid polypeptide reads, in one-letter code: Nuclear factor erythroid 2-related factor 2 (597 aa).

Residues 29 to 31 carry the DLG motif motif; it reads DLG. Position 40 is a phosphoserine; by PKC (S40). Positions 79–82 match the ETGE motif motif; it reads ETGE. A Phosphoserine modification is found at S207. Positions 327 to 440 are disordered; sequence TMEFNDSDSG…APFTKDKHSS (114 aa). The segment covering 333 to 345 has biased composition (polar residues); it reads SDSGISLNTSPSR. N-linked (Glc) (glycation) lysine glycosylation is found at K454, K464, and K479. The bZIP domain maps to 489 to 552; that stretch reads LIRDIRRRGK…HLLKRRLSTL (64 aa). Residue R491 is glycosylated (N-linked (Glc) (glycation) arginine). A basic motif region spans residues 491–510; sequence RDIRRRGKNKVAAQNCRKRK. The tract at residues 514 to 521 is leucine-zipper; it reads IVELEQDL. R561 carries N-linked (Glc) (glycation) arginine glycosylation. Residues 563–597 are disordered; it reads EDGKPYSPSEYSLQQTRDGNVFLVPKSKKPDTKKN. K566 carries an N-linked (Glc) (glycation) lysine glycan. The segment covering 571-580 has biased composition (polar residues); it reads SEYSLQQTRD. Residues 583-588 form a mediates interaction with CHD6 and is necessary to activate transcription region; it reads VFLVPK. 2 positions are modified to N6-acetyllysine; by CREBBP: K588 and K591.

The protein belongs to the bZIP family. CNC subfamily. In terms of assembly, heterodimer; heterodimerizes with small Maf proteins. Interacts (via the bZIP domain) with MAFG and MAFK; required for binding to antioxidant response elements (AREs) on DNA. Interacts with KEAP1; the interaction is direct and promotes ubiquitination by the BCR(KEAP1) E3 ubiquitin ligase complex. Forms a ternary complex with PGAM5 and KEAP1. Interacts with EEF1D at heat shock promoter elements (HSE). Interacts via its leucine-zipper domain with the coiled-coil domain of PMF1. Interacts with CHD6; involved in activation of the transcription. Interacts with ESRRB; represses NFE2L2 transcriptional activity. Interacts with MOTS-c, a peptide produced by the mitochondrially encoded 12S rRNA MT-RNR1; the interaction occurs in the nucleus following metabolic stress. In terms of processing, ubiquitinated in the cytoplasm by the BCR(KEAP1) E3 ubiquitin ligase complex leading to its degradation. In response to oxidative stress, electrophile metabolites, such as sulforaphane, modify KEAP1, leading to inhibit activity of the BCR(KEAP1) complex, promoting NFE2L2/NRF2 nuclear accumulation and activity. In response to autophagy, the BCR(KEAP1) complex is inactivated. Phosphorylated by EIF2AK3/PERK following unfolded protein response (UPR), promoting dissociation from its cytoplasmic inhibitor KEAP1, followed by its translocation into the nucleus. Phosphorylation of Ser-40 by PKC in response to oxidative stress dissociates NFE2L2 from its cytoplasmic inhibitor KEAP1, promoting its translocation into the nucleus. Post-translationally, acetylation at Lys-588 and Lys-591 increases nuclear localization whereas deacetylation by SIRT1 enhances cytoplasmic presence. In terms of processing, glycation impairs transcription factor activity by preventing heterodimerization with small Maf proteins. Deglycation by FN3K restores activity. Widely expressed. Highest expression in liver, skeletal muscle, luminal cells of the stomach and intestine, lining of the bronchi and alveoli, and in renal tubules; followed by heart, spleen, testis and brain.

The protein resides in the cytoplasm. It is found in the cytosol. The protein localises to the nucleus. Transcription factor that plays a key role in the response to oxidative stress: binds to antioxidant response (ARE) elements present in the promoter region of many cytoprotective genes, such as phase 2 detoxifying enzymes, and promotes their expression, thereby neutralizing reactive electrophiles. In normal conditions, ubiquitinated and degraded in the cytoplasm by the BCR(KEAP1) complex. In response to oxidative stress, electrophile metabolites inhibit activity of the BCR(KEAP1) complex, promoting nuclear accumulation of NFE2L2/NRF2, heterodimerization with one of the small Maf proteins and binding to ARE elements of cytoprotective target genes. The NFE2L2/NRF2 pathway is also activated in response to selective autophagy: autophagy promotes interaction between KEAP1 and SQSTM1/p62 and subsequent inactivation of the BCR(KEAP1) complex, leading to NFE2L2/NRF2 nuclear accumulation and expression of cytoprotective genes. The NFE2L2/NRF2 pathway is also activated during the unfolded protein response (UPR), contributing to redox homeostasis and cell survival following endoplasmic reticulum stress. May also be involved in the transcriptional activation of genes of the beta-globin cluster by mediating enhancer activity of hypersensitive site 2 of the beta-globin locus control region. Also plays an important role in the regulation of the innate immune response. It is a critical regulator of the innate immune response and survival during sepsis by maintaining redox homeostasis and restraint of the dysregulation of pro-inflammatory signaling pathways like MyD88-dependent and -independent and TNF-alpha signaling. Suppresses macrophage inflammatory response by blocking pro-inflammatory cytokine transcription and the induction of IL6. Binds to the proximity of pro-inflammatory genes in macrophages and inhibits RNA Pol II recruitment. The inhibition is independent of the Nrf2-binding motif and reactive oxygen species level. Represses antiviral cytosolic DNA sensing by suppressing the expression of the adapter protein STING1 and decreasing responsiveness to STING1 agonists while increasing susceptibility to infection with DNA viruses. This chain is Nuclear factor erythroid 2-related factor 2, found in Mus musculus (Mouse).